The sequence spans 549 residues: Glucose-6-phosphate isomerase (549 aa).

N6-acetyllysine occurs at positions 80, 228, and 234. The active-site Proton donor is Glu-355. Active-site residues include His-386 and Lys-514.

Belongs to the GPI family.

It is found in the cytoplasm. It carries out the reaction alpha-D-glucose 6-phosphate = beta-D-fructose 6-phosphate. Its pathway is carbohydrate biosynthesis; gluconeogenesis. It functions in the pathway carbohydrate degradation; glycolysis; D-glyceraldehyde 3-phosphate and glycerone phosphate from D-glucose: step 2/4. In terms of biological role, catalyzes the reversible isomerization of glucose-6-phosphate to fructose-6-phosphate. The protein is Glucose-6-phosphate isomerase of Shigella boydii serotype 4 (strain Sb227).